The sequence spans 305 residues: MSQFEKTPGWLDWYANPSKPQFKLPAGAVDAHCHVFGPGNEFPFAPERKYTPCDASKAQLYALRDHLGFARNVVVQATCHGADNRAMVDACKSSGGKARGVATVKRSISDAELQQLHDAGVRGVRFNFVKRLVDFTPKDELMEIAGRIAKLGWHVVIYFEAVDLPELWDFFTALPTTVVVDHMGRPDVTKGVDSEEFALFLKFMREHQNVWSKVSCPERLSVTGPKALNGEQNAYRDVVPFARRVVEEFPDRVLWGTDWPHPNLKDHMPDDGLLVDFIPHIAPTAELQQKLLVDNPMRLYWPEEV.

Substrate contacts are provided by residues 32-34 (HCH), Tyr50, Thr78, Arg125, Arg131, Tyr158, and His182. The active-site Proton acceptor is Asp258. Asn263 serves as a coordination point for substrate.

The protein belongs to the metallo-dependent hydrolases superfamily. PDC hydrolase family.

The enzyme catalyses 2-oxo-2H-pyran-4,6-dicarboxylate + H2O = (1E)-4-oxobut-1-ene-1,2,4-tricarboxylate + H(+). With respect to regulation, strongly inhibited by 1 mM Zn(2+), Cu(2+), Mn(2+) and Co(2+) ions. Also inhibited by 5,5'-dithiobis(2-nitrobenzoic acid) (Ellman reagent) in vitro. Its function is as follows. Involved in the degradation of aromatic compounds via the protocatechuate 4,5-cleavage pathway. Catalyzes the hydrolysis of 2-pyrone-4,6-dicarboxylate (PDC) to oxalomesaconate (OMA). Also catalyzes the reverse reaction. This is 2-pyrone-4,6-dicarbaxylate hydrolase from Comamonas testosteroni (Pseudomonas testosteroni).